Here is a 132-residue protein sequence, read N- to C-terminus: Large ribosomal subunit protein bL17 (132 aa).

This sequence belongs to the bacterial ribosomal protein bL17 family. Part of the 50S ribosomal subunit. Contacts protein L32.

In Ruthia magnifica subsp. Calyptogena magnifica, this protein is Large ribosomal subunit protein bL17.